Reading from the N-terminus, the 444-residue chain is N-succinylarginine dihydrolase (444 aa).

Substrate contacts are provided by residues 19–28 (AGLSFGNVAS), Asn110, and 137–138 (HR). Residue Glu174 is part of the active site. Residue Arg214 participates in substrate binding. Residue His250 is part of the active site. Positions 252 and 362 each coordinate substrate. The Nucleophile role is filled by Cys368.

The protein belongs to the succinylarginine dihydrolase family. As to quaternary structure, homodimer.

The enzyme catalyses N(2)-succinyl-L-arginine + 2 H2O + 2 H(+) = N(2)-succinyl-L-ornithine + 2 NH4(+) + CO2. Its pathway is amino-acid degradation; L-arginine degradation via AST pathway; L-glutamate and succinate from L-arginine: step 2/5. Its function is as follows. Catalyzes the hydrolysis of N(2)-succinylarginine into N(2)-succinylornithine, ammonia and CO(2). The protein is N-succinylarginine dihydrolase of Shewanella oneidensis (strain ATCC 700550 / JCM 31522 / CIP 106686 / LMG 19005 / NCIMB 14063 / MR-1).